The following is a 1013-amino-acid chain: Polyprotein of EF-Ts, chloroplastic (1013 aa).

Residues 1-43 (MLRELGRTATVKAHGRSVLRPVRGPAGRRQVAFTGVRPSVRVF) constitute a chloroplast transit peptide. The region spanning 64 to 133 (GSEYEGTVTT…EKKRVSLELK (70 aa)) is the S1 motif 1 domain. The span at 141-150 (SAEESDDIIT) shows a compositional bias: acidic residues. The tract at residues 141–163 (SAEESDDIITEPDREGADATDDD) is disordered. The 105-residue stretch at 227-331 (MEEVTGKVAR…DGRGISLTHF (105 aa)) folds into the S1 motif 2 domain. Residues 772–798 (QAKAAAPAAPKKEEPKKEEPKKATVAV) are disordered. The span at 781–793 (PKKEEPKKEEPKK) shows a compositional bias: basic and acidic residues.

It belongs to the EF-Ts family. Component of the chloroplast ribosome 30S and 70S subunits, as well as polysomes. As to quaternary structure, component of the chloroplast ribosome 70S subunit, and at low levels, present in polysomes. In terms of assembly, associates transiently with chloroplast polysomes.

It localises to the plastid. The protein localises to the chloroplast. Functionally, associates with the EF-Tu.GDP complex and induces the exchange of GDP to GTP. It remains bound to the aminoacyl-tRNA.EF-Tu.GTP complex up to the GTP hydrolysis stage on the ribosome. In terms of biological role, binds to psbD and psbA mRNAs 5'-untranslated regions (UTRs) in vitro. This is Polyprotein of EF-Ts, chloroplastic from Chlamydomonas reinhardtii (Chlamydomonas smithii).